We begin with the raw amino-acid sequence, 576 residues long: POU domain, class 6, transcription factor 1 (576 aa).

The tract at residues 65–88 (PAEAGSCDPDHSAEATVAARSPSE) is disordered. The 75-residue stretch at 414–488 (EDGINLEEIR…VLEKWLMEAE (75 aa)) folds into the POU-specific domain. Residues 509-568 (KRKRRTSFTPQAIEALNAYFEKNPLPTGQEITEIAKELNYDREVVRVWFCNRRQTLKNTS) constitute a DNA-binding region (homeobox).

Belongs to the POU transcription factor family. Class-6 subfamily. In terms of tissue distribution, isoform C1 and isoform C2 are found in the brain, while isoform C7 is found in the testis.

It is found in the nucleus. Its function is as follows. Transcription factor that binds preferentially to a variant of the octamer motif (5'-ATGATAAT-3'). This Mus musculus (Mouse) protein is POU domain, class 6, transcription factor 1 (Pou6f1).